A 425-amino-acid polypeptide reads, in one-letter code: Histidinol dehydrogenase (425 aa).

The NAD(+) site is built by tyrosine 124, glutamine 184, and asparagine 207. Positions 230, 252, and 255 each coordinate substrate. Positions 252 and 255 each coordinate Zn(2+). Catalysis depends on proton acceptor residues glutamate 321 and histidine 322. Substrate is bound by residues histidine 322, aspartate 355, glutamate 409, and histidine 414. Aspartate 355 contacts Zn(2+). Position 414 (histidine 414) interacts with Zn(2+).

Belongs to the histidinol dehydrogenase family. The cofactor is Zn(2+).

It catalyses the reaction L-histidinol + 2 NAD(+) + H2O = L-histidine + 2 NADH + 3 H(+). It participates in amino-acid biosynthesis; L-histidine biosynthesis; L-histidine from 5-phospho-alpha-D-ribose 1-diphosphate: step 9/9. In terms of biological role, catalyzes the sequential NAD-dependent oxidations of L-histidinol to L-histidinaldehyde and then to L-histidine. The protein is Histidinol dehydrogenase of Halobacterium salinarum (strain ATCC 700922 / JCM 11081 / NRC-1) (Halobacterium halobium).